A 585-amino-acid chain; its full sequence is Arginine--tRNA ligase (585 aa).

A 'HIGH' region motif is present at residues 127 to 137 (PNTNKPLHVGH).

It belongs to the class-I aminoacyl-tRNA synthetase family. As to quaternary structure, monomer.

Its subcellular location is the cytoplasm. The catalysed reaction is tRNA(Arg) + L-arginine + ATP = L-arginyl-tRNA(Arg) + AMP + diphosphate. This chain is Arginine--tRNA ligase, found in Borrelia garinii subsp. bavariensis (strain ATCC BAA-2496 / DSM 23469 / PBi) (Borreliella bavariensis).